Consider the following 293-residue polypeptide: Protein nud-2 (293 aa).

A coiled-coil region spans residues 36-147 (EIEKMMDSEL…EKIAMLESEL (112 aa)). A required for interaction with unc-83 isoform c region spans residues 239 to 293 (KSQRVSTGTGAGACINRIVKDLMTKVERLDSILSTIRVSNNSSNNNSSHLTTTRA).

The protein belongs to the nudE family. In terms of assembly, component of a dynein-regulating complex composed of at least lis-1 and nud-2. Interacts with lis-1; the interaction is direct. Interacts (via C-terminus) with unc-83; the interaction is direct, and is required for recruitment of nud-2 to the nuclear envelope. Expressed in ventral cord neurons, the pharynx, seam cells of the hypodermis and in vulval muscle cells.

It localises to the nucleus envelope. Part of a complex with lis-1, which is recruited to the nuclear envelope by unc-83, where, in turn, it recruits dynein to the nuclear surface and regulates nuclear migration in hypodermal precursor cells. Plays a role in GABAergic synaptic vesicle localization in the ventral nerve cord. This chain is Protein nud-2, found in Caenorhabditis elegans.